The sequence spans 376 residues: MADQLTPHLEIPTAIKPRDGRFGSGPSKVRLEQLQTLTTTAAALFGTSHRQAPVKNLVGRVRSGLAELFSLPDGYEVILGNGGATAFWDAAAFGLIDKRSLHLTYGEFSAKFASAVSKNPFVGEPIIITSDPGSAPEPQTDPSVDVIAWAHNETSTGVAVAVRRPEGSDDALVVIDATSGAGGLPVDIAETDAYYFAPQKNFASDGGLWLAIMSPAALSRIEAIAATGRWVPDFLSLPIAVENSLKNQTYNTPAIATLALLAEQIDWLVGNGGLDWAVKRTADSSQRLYSWAQERPYTTPFVTDPGLRSQVVGTIDFVDDVDAGTVAKILRANGIVDTEPYRKLGRNQLRVAMFPAVEPDDVSALTECVDWVVERL.

R50 lines the L-glutamate pocket. Pyridoxal 5'-phosphate is bound by residues 84 to 85 (AT), F108, T154, D176, and Q199. An N6-(pyridoxal phosphate)lysine modification is found at K200. Residue 251–252 (NT) coordinates pyridoxal 5'-phosphate.

Belongs to the class-V pyridoxal-phosphate-dependent aminotransferase family. SerC subfamily. In terms of assembly, homodimer. The cofactor is pyridoxal 5'-phosphate.

It localises to the cytoplasm. It carries out the reaction O-phospho-L-serine + 2-oxoglutarate = 3-phosphooxypyruvate + L-glutamate. It catalyses the reaction 4-(phosphooxy)-L-threonine + 2-oxoglutarate = (R)-3-hydroxy-2-oxo-4-phosphooxybutanoate + L-glutamate. It functions in the pathway amino-acid biosynthesis; L-serine biosynthesis; L-serine from 3-phospho-D-glycerate: step 2/3. It participates in cofactor biosynthesis; pyridoxine 5'-phosphate biosynthesis; pyridoxine 5'-phosphate from D-erythrose 4-phosphate: step 3/5. Catalyzes the reversible conversion of 3-phosphohydroxypyruvate to phosphoserine and of 3-hydroxy-2-oxo-4-phosphonooxybutanoate to phosphohydroxythreonine. The sequence is that of Putative phosphoserine aminotransferase from Mycobacterium bovis (strain ATCC BAA-935 / AF2122/97).